The following is a 276-amino-acid chain: MIVIGRSIVHPYITNEYEPFANEKQQILSIMAGNQEIYSFRTSGELSFDLNLRVNIITSALELFQSGFQFRTFQQSFCNPQYWKRTSLGGFELLPNIPPSIAIQDIFKNGKLYGTECATAMIIIFYKALLALYEEETFNRLFANLLLYTWDYDQDLKLITKTGGDLVPGDLVYFKNPQVNPATIEWQGENTIYLGNFFFYGHGVGVKTKEEIIYALNERRVPYAFISAFLTDTITRIDSRLMSYHASPSTPQTSIGFIPIRDDAIVATVGNTTTVY.

This sequence belongs to the bacillus TGase family.

The catalysed reaction is L-glutaminyl-[protein] + L-lysyl-[protein] = [protein]-L-lysyl-N(6)-5-L-glutamyl-[protein] + NH4(+). In terms of biological role, probably plays a role in the assembly of the spore coat proteins by catalyzing epsilon-(gamma-glutamyl)lysine cross-links. In Bacillus cereus (strain AH187), this protein is Protein-glutamine gamma-glutamyltransferase.